Here is a 481-residue protein sequence, read N- to C-terminus: Aromatic amino acid aminotransferase C1773.13 (481 aa).

The protein belongs to the class-I pyridoxal-phosphate-dependent aminotransferase family. Pyridoxal 5'-phosphate serves as cofactor.

The protein localises to the cytoplasm. The enzyme catalyses an aromatic L-alpha-amino acid + 2-oxoglutarate = an aromatic oxo-acid + L-glutamate. Has aromatic amino acid transaminase activity. The polypeptide is Aromatic amino acid aminotransferase C1773.13 (Schizosaccharomyces pombe (strain 972 / ATCC 24843) (Fission yeast)).